Consider the following 170-residue polypeptide: Macro domain-containing protein DR_2288 (170 aa).

Positions 1 to 170 (MPLELVQGDI…HVFERALAQL (170 aa)) constitute a Macro domain.

It belongs to the MacroD-type family.

The polypeptide is Macro domain-containing protein DR_2288 (Deinococcus radiodurans (strain ATCC 13939 / DSM 20539 / JCM 16871 / CCUG 27074 / LMG 4051 / NBRC 15346 / NCIMB 9279 / VKM B-1422 / R1)).